The sequence spans 184 residues: MIKEILKKADEKMGKTIVALKRELASMKAGRANPAMLDRIEAEYYGSMTPLNQLGNISIPEARVLLIQPWDKSALSAIEKAILKSDLGLNPSNDGTVIRLVIPELTEETRKNIVKTVKKTGEEAKVAIRSIRRDCNDDVKNLKKDDVSEDDIKKAEDDIQKKTDKYIKEIDSIISAKEKEILSI.

This sequence belongs to the RRF family.

It localises to the cytoplasm. Its function is as follows. Responsible for the release of ribosomes from messenger RNA at the termination of protein biosynthesis. May increase the efficiency of translation by recycling ribosomes from one round of translation to another. In Clostridium botulinum (strain Langeland / NCTC 10281 / Type F), this protein is Ribosome-recycling factor.